Reading from the N-terminus, the 941-residue chain is Translation initiation factor IF-2 (941 aa).

Over residues 170 to 209 (DAQKAEVDAQKAEAEKPVEVKADESAIEEKKRVAAEESKK) the composition is skewed to basic and acidic residues. Disordered regions lie at residues 170–228 (DAQK…KAAA) and 252–351 (RAIK…SNFQ). Positions 256–269 (APEPVAPVAKPAAE) are enriched in low complexity. Residues 271–297 (TLHKPADKKPGEKKDEKKPAVTADKKS) are compositionally biased toward basic and acidic residues. Over residues 299–308 (KSANVSSTWQ) the composition is skewed to polar residues. The tr-type G domain maps to 441 to 610 (PRAPVVTVMG…LLQAEVLELK (170 aa)). The interval 450-457 (GHVDHGKT) is G1. Residue 450-457 (GHVDHGKT) participates in GTP binding. Positions 475 to 479 (GITQH) are G2. Positions 496–499 (DTPG) are G3. Residues 496–500 (DTPGH) and 550–553 (NKID) each bind GTP. The G4 stretch occupies residues 550-553 (NKID). The segment at 586–588 (SAK) is G5.

It belongs to the TRAFAC class translation factor GTPase superfamily. Classic translation factor GTPase family. IF-2 subfamily.

It localises to the cytoplasm. Its function is as follows. One of the essential components for the initiation of protein synthesis. Protects formylmethionyl-tRNA from spontaneous hydrolysis and promotes its binding to the 30S ribosomal subunits. Also involved in the hydrolysis of GTP during the formation of the 70S ribosomal complex. The sequence is that of Translation initiation factor IF-2 from Herminiimonas arsenicoxydans.